We begin with the raw amino-acid sequence, 138 residues long: Ribonuclease kappa-A (138 aa).

The signal sequence occupies residues 1 to 24 (MVLYFSPVLTFFLANFFNSKSTTT). The Extracellular portion of the chain corresponds to 25–75 (ENLQVFLVENQHRDSKRKINPTFSKKGIEVRQQNENLWSKIVALRFDYSVW). Residues 76-96 (GIIQLVLMMGLFFYINSVALI) traverse the membrane as a helical segment. Topologically, residues 97-138 (EDLPIDEEFNSVEEFYTAATSAYNQNAYTVGLPVHLCAYASI) are cytoplasmic.

Belongs to the RNase K family.

Its subcellular location is the membrane. Functionally, endoribonuclease. This Ceratitis capitata (Mediterranean fruit fly) protein is Ribonuclease kappa-A.